The primary structure comprises 212 residues: Ribosomal RNA small subunit methyltransferase G (212 aa).

Residues Gly76, Met81, 127–128 (VE), and Arg145 each bind S-adenosyl-L-methionine.

It belongs to the methyltransferase superfamily. RNA methyltransferase RsmG family.

The protein localises to the cytoplasm. The enzyme catalyses guanosine(527) in 16S rRNA + S-adenosyl-L-methionine = N(7)-methylguanosine(527) in 16S rRNA + S-adenosyl-L-homocysteine. Functionally, specifically methylates the N7 position of guanine in position 527 of 16S rRNA. This chain is Ribosomal RNA small subunit methyltransferase G, found in Acinetobacter baylyi (strain ATCC 33305 / BD413 / ADP1).